The following is a 378-amino-acid chain: 1-acyl-sn-glycerol-3-phosphate acyltransferase delta (378 aa).

Residues 11–31 (FLCHLVFCYVFIASGLIVNAI) form a helical membrane-spanning segment. Residues 96-101 (HKFEID) carry the HXXXXD motif motif. Transmembrane regions (helical) follow at residues 125-145 (ELAY…IFCT), 311-331 (WLFW…SMVS), and 338-358 (LASL…MIGV).

Belongs to the 1-acyl-sn-glycerol-3-phosphate acyltransferase family. As to expression, expressed at a high levels in the brain, at intermediate or low levels in skeletal muscles, gut, kidney, spleen and lung. Barely detectable in heart and liver.

It is found in the endoplasmic reticulum membrane. The catalysed reaction is a 1-acyl-sn-glycero-3-phosphate + an acyl-CoA = a 1,2-diacyl-sn-glycero-3-phosphate + CoA. It catalyses the reaction (4Z,7Z,10Z,13Z,16Z,19Z)-docosahexaenoyl-CoA + 1-hexadecanoyl-sn-glycero-3-phosphate = 1-hexadecanoyl-2-(4Z,7Z,10Z,13Z,16Z,19Z-docosahexaenoyl)-sn-glycero-3-phosphate + CoA. It carries out the reaction 1-octadecanoyl-sn-glycero-3-phosphate + (9Z,12Z)-octadecadienoyl-CoA = 1-octadecanoyl-2-(9Z,12Z-octadecadienoyl)-sn-glycero-3-phosphate + CoA. The enzyme catalyses 1-octadecanoyl-sn-glycero-3-phosphate + (4Z,7Z,10Z,13Z,16Z,19Z)-docosahexaenoyl-CoA = 1-octadecanoyl-2-(4Z,7Z,10Z,13Z,16Z,19Z-docosahexaenoyl)-sn-glycero-3-phosphate + CoA. The catalysed reaction is (4Z,7Z,10Z,13Z,16Z,19Z)-docosahexaenoyl-CoA + 1-(9Z-octadecenoyl)-sn-glycero-3-phosphate = 1-(9Z-octadecenoyl)-2-(4Z,7Z,10Z,13Z,16Z,19Z-docosahexaenoyl)-sn-glycero-3-phosphate + CoA. The protein operates within phospholipid metabolism; CDP-diacylglycerol biosynthesis; CDP-diacylglycerol from sn-glycerol 3-phosphate: step 2/3. Its function is as follows. Converts 1-acyl-sn-glycerol-3-phosphate (lysophosphatidic acid or LPA) into 1,2-diacyl-sn-glycerol-3-phosphate (phosphatidic acid or PA) by incorporating an acyl moiety at the sn-2 position of the glycerol backbone. Exhibits high acyl-CoA specificity for polyunsaturated fatty acyl-CoA, especially docosahexaenoyl-CoA (22:6-CoA, DHA-CoA). The protein is 1-acyl-sn-glycerol-3-phosphate acyltransferase delta (Agpat4) of Mus musculus (Mouse).